A 506-amino-acid polypeptide reads, in one-letter code: Maturase K (506 aa).

Belongs to the intron maturase 2 family. MatK subfamily.

The protein localises to the plastid. The protein resides in the chloroplast. Usually encoded in the trnK tRNA gene intron. Probably assists in splicing its own and other chloroplast group II introns. In Lactuca sativa (Garden lettuce), this protein is Maturase K.